The following is a 309-amino-acid chain: Protein FdhE (309 aa).

The protein belongs to the FdhE family.

It is found in the cytoplasm. Its function is as follows. Necessary for formate dehydrogenase activity. In Escherichia coli O127:H6 (strain E2348/69 / EPEC), this protein is Protein FdhE.